Here is a 469-residue protein sequence, read N- to C-terminus: Cysteine--tRNA ligase (469 aa).

A Zn(2+)-binding site is contributed by Cys33. The 'HIGH' region motif lies at 35–45; the sequence is ATVQGLPHIGH. Positions 211, 236, and 240 each coordinate Zn(2+). The 'KMSKS' region signature appears at 267 to 271; that stretch reads KMSKS. Residue Lys270 coordinates ATP.

This sequence belongs to the class-I aminoacyl-tRNA synthetase family. As to quaternary structure, monomer. Zn(2+) serves as cofactor.

The protein resides in the cytoplasm. It catalyses the reaction tRNA(Cys) + L-cysteine + ATP = L-cysteinyl-tRNA(Cys) + AMP + diphosphate. This Mycobacterium bovis (strain ATCC BAA-935 / AF2122/97) protein is Cysteine--tRNA ligase (cysS).